A 346-amino-acid polypeptide reads, in one-letter code: MNPITLIIIYFTILMGPVITMSSSNLLLMWVGLEMSLLAIIPLLANKKSPRSTEAATKYFLTQATASMIILLVIILNYKQSGMWTLQQQTNNMLLNMMLISLAMKLGLAPFHYWLPEVTQGIPLHIGLILLTWQKIAPLSILYQFYQLLNPTITTILAISSVFVGAWGGLNQTQTRKIMAYSSIAHMGWMTAILPYNPNLTLLNLTIYILLTVPMFITLMTNSATTINTLSLAWNKTPMILTMTSIILLSLGGLPPLTGFLPKWAIISELLKNNCSTLSTLMAIMALLSLFFYTRLIYSMSLTMFPTNNNSKMISHHHQNPKHNFILPTLTVLSTLTLPLSSQLIT.

10 helical membrane passes run 25–45 (NLLL…PLLA), 56–76 (ATKY…VIIL), 94–114 (LLNM…FHYW), 122–142 (IPLH…LSIL), 148–168 (LLNP…GAWG), 178–198 (IMAY…PYNP), 200–220 (LTLL…ITLM), 240–260 (ILTM…LTGF), 278–298 (LSTL…RLIY), and 325–345 (FILP…SQLI).

This sequence belongs to the complex I subunit 2 family. Core subunit of respiratory chain NADH dehydrogenase (Complex I) which is composed of 45 different subunits. Interacts with TMEM242.

It localises to the mitochondrion inner membrane. It catalyses the reaction a ubiquinone + NADH + 5 H(+)(in) = a ubiquinol + NAD(+) + 4 H(+)(out). Functionally, core subunit of the mitochondrial membrane respiratory chain NADH dehydrogenase (Complex I) which catalyzes electron transfer from NADH through the respiratory chain, using ubiquinone as an electron acceptor. Essential for the catalytic activity and assembly of complex I. The chain is NADH-ubiquinone oxidoreductase chain 2 from Rattus norvegicus (Rat).